The following is a 121-amino-acid chain: Aspartate 1-decarboxylase (121 aa).

Ser-25 serves as the catalytic Schiff-base intermediate with substrate; via pyruvic acid. The residue at position 25 (Ser-25) is a Pyruvic acid (Ser). Thr-57 contributes to the substrate binding site. Tyr-58 serves as the catalytic Proton donor. Substrate is bound at residue 73–75 (GAA).

The protein belongs to the PanD family. Heterooctamer of four alpha and four beta subunits. The cofactor is pyruvate. In terms of processing, is synthesized initially as an inactive proenzyme, which is activated by self-cleavage at a specific serine bond to produce a beta-subunit with a hydroxyl group at its C-terminus and an alpha-subunit with a pyruvoyl group at its N-terminus.

The protein localises to the cytoplasm. The catalysed reaction is L-aspartate + H(+) = beta-alanine + CO2. The protein operates within cofactor biosynthesis; (R)-pantothenate biosynthesis; beta-alanine from L-aspartate: step 1/1. Functionally, catalyzes the pyruvoyl-dependent decarboxylation of aspartate to produce beta-alanine. The protein is Aspartate 1-decarboxylase of Wolinella succinogenes (strain ATCC 29543 / DSM 1740 / CCUG 13145 / JCM 31913 / LMG 7466 / NCTC 11488 / FDC 602W) (Vibrio succinogenes).